A 253-amino-acid chain; its full sequence is MDDYLVSIIMPSYNAEHTISASISSVLKQTYANWELLVCDDDSSDNTRFKVLEFSDSRIKLLTNEYAKGAAGARNTALKYASGRFIAFLDSDDIWIANKLEMQISMMLKNNISFMYGNYEIINNNSIVGKFVAPQKITYNKLLKNCGIGCLTVVLDRTLLNPFSFPFVHKEDYYLWLSILKDNNISAINCGFICSKYRLSQSSISSNKFKELKRQWDVLGDFVENPLARIYYLLNYIVIGIKKHAFDYKNGKK.

It belongs to the glycosyltransferase 2 family. Requires Mn(2+) as cofactor. Mg(2+) serves as cofactor.

The protein resides in the cell inner membrane. The catalysed reaction is N-acetyl-alpha-D-glucosaminyl-di-trans,octa-cis-undecaprenyl diphosphate + UDP-alpha-D-glucose = beta-D-Glc-(1-&gt;3)-alpha-D-GlcNAc-di-trans,octa-cis-undecaprenyl diphosphate + UDP + H(+). The protein operates within bacterial outer membrane biogenesis; lipopolysaccharide biosynthesis. In terms of biological role, catalyzes the addition of Glc, the second sugar moiety of the O152-antigen repeating unit, to GlcNAc-pyrophosphate-undecaprenol. The chain is UDP-Glc:alpha-D-GlcNAc-diphosphoundecaprenol beta-1,3-glucosyltransferase WfgD (wfgD) from Escherichia coli.